Here is a 498-residue protein sequence, read N- to C-terminus: DNA-directed RNA polymerase subunit Rpo2N (498 aa).

It belongs to the RNA polymerase beta chain family. In terms of assembly, part of the RNA polymerase complex.

The protein resides in the cytoplasm. The enzyme catalyses RNA(n) + a ribonucleoside 5'-triphosphate = RNA(n+1) + diphosphate. Functionally, DNA-dependent RNA polymerase (RNAP) catalyzes the transcription of DNA into RNA using the four ribonucleoside triphosphates as substrates. The Rpo2 subunit (Rpo2N and Rpo2C in this organism) is implicated in DNA promoter recognition and in nucleotide binding. The polypeptide is DNA-directed RNA polymerase subunit Rpo2N (Methanocaldococcus jannaschii (strain ATCC 43067 / DSM 2661 / JAL-1 / JCM 10045 / NBRC 100440) (Methanococcus jannaschii)).